We begin with the raw amino-acid sequence, 182 residues long: Ribosome maturation factor RimP (182 aa).

It belongs to the RimP family.

Its subcellular location is the cytoplasm. Functionally, required for maturation of 30S ribosomal subunits. This chain is Ribosome maturation factor RimP, found in Chloroherpeton thalassium (strain ATCC 35110 / GB-78).